Here is a 202-residue protein sequence, read N- to C-terminus: Imidazoleglycerol-phosphate dehydratase (202 aa).

It belongs to the imidazoleglycerol-phosphate dehydratase family.

It localises to the cytoplasm. The enzyme catalyses D-erythro-1-(imidazol-4-yl)glycerol 3-phosphate = 3-(imidazol-4-yl)-2-oxopropyl phosphate + H2O. It participates in amino-acid biosynthesis; L-histidine biosynthesis; L-histidine from 5-phospho-alpha-D-ribose 1-diphosphate: step 6/9. This is Imidazoleglycerol-phosphate dehydratase from Chelativorans sp. (strain BNC1).